The following is a 241-amino-acid chain: Large ribosomal subunit protein uL3 (241 aa).

2 disordered regions span residues 140-162 (SHRS…NKKM) and 217-241 (PLPG…EETA). The residue at position 151 (Gln151) is an N5-methylglutamine. Residues 229-241 (APATEAPAAEETA) are compositionally biased toward low complexity.

This sequence belongs to the universal ribosomal protein uL3 family. As to quaternary structure, part of the 50S ribosomal subunit. Forms a cluster with proteins L14 and L19. Post-translationally, methylated by PrmB.

Functionally, one of the primary rRNA binding proteins, it binds directly near the 3'-end of the 23S rRNA, where it nucleates assembly of the 50S subunit. The polypeptide is Large ribosomal subunit protein uL3 (Methylobacterium radiotolerans (strain ATCC 27329 / DSM 1819 / JCM 2831 / NBRC 15690 / NCIMB 10815 / 0-1)).